The chain runs to 180 residues: uncharacterized protein (180 aa).

The span at 114-136 (DKISESDSLPDEYKEYVVKHDSD) shows a compositional bias: basic and acidic residues. A disordered region spans residues 114 to 180 (DKISESDSLP…NFDNPDDNPK (67 aa)). The segment covering 137–146 (NSDNDSDNSD) has biased composition (acidic residues). The span at 147 to 173 (NDSNNSDNDSNNSDSDSDNSNDPNNFD) shows a compositional bias: low complexity.

This is an uncharacterized protein from Acanthamoeba polyphaga (Amoeba).